Reading from the N-terminus, the 164-residue chain is Endoribonuclease YbeY (164 aa).

H130, H134, and H140 together coordinate Zn(2+).

It belongs to the endoribonuclease YbeY family. The cofactor is Zn(2+).

It is found in the cytoplasm. In terms of biological role, single strand-specific metallo-endoribonuclease involved in late-stage 70S ribosome quality control and in maturation of the 3' terminus of the 16S rRNA. This chain is Endoribonuclease YbeY, found in Streptococcus mutans serotype c (strain ATCC 700610 / UA159).